A 794-amino-acid chain; its full sequence is Zinc finger Y-chromosomal protein 1 (794 aa).

A Nuclear localization signal motif is present at residues 380–389; sequence TKQKLKKKRR. 13 C2H2-type zinc fingers span residues 411 to 433, 442 to 464, 477 to 499, 508 to 531, 537 to 559, 565 to 588, 594 to 616, 622 to 645, 651 to 673, 679 to 702, 708 to 730, 736 to 759, and 765 to 788; these read YPCM…MKNH, YRCT…LESH, LECE…KLTH, HICK…LAVH, HICV…MRTH, YLCQ…KTKH, FKCD…AILH, HQCL…ISVH, HKCE…EAAH, HQCR…LSVH, YRCK…MKTH, YQCE…ISIH, and HRCD…LKHH.

Belongs to the krueppel C2H2-type zinc-finger protein family. ZFX/ZFY subfamily.

It is found in the nucleus. In terms of biological role, probable transcriptional activator. The sequence is that of Zinc finger Y-chromosomal protein 1 (zfy1) from Xenopus laevis (African clawed frog).